Consider the following 268-residue polypeptide: uncharacterized protein (268 aa).

Positions 15 to 77 constitute an HTH iclR-type domain; that stretch reads NQALIRGLRL…NAAGSYRLTI (63 aa). Positions 37–56 form a DNA-binding region, H-T-H motif; the sequence is LAKLAELANLNKSTAHRLLQ. Residues 92–265 form the IclR-ED domain; it reads IIHVASPYLE…AEQISLELGY (174 aa).

This is an uncharacterized protein from Haemophilus influenzae (strain ATCC 51907 / DSM 11121 / KW20 / Rd).